The sequence spans 159 residues: ATP synthase subunit b (159 aa).

Residues 8–28 traverse the membrane as a helical segment; the sequence is ILATIINFIILILILKHFFWD.

It belongs to the ATPase B chain family. F-type ATPases have 2 components, F(1) - the catalytic core - and F(0) - the membrane proton channel. F(1) has five subunits: alpha(3), beta(3), gamma(1), delta(1), epsilon(1). F(0) has three main subunits: a(1), b(2) and c(10-14). The alpha and beta chains form an alternating ring which encloses part of the gamma chain. F(1) is attached to F(0) by a central stalk formed by the gamma and epsilon chains, while a peripheral stalk is formed by the delta and b chains.

The protein resides in the cell membrane. Functionally, f(1)F(0) ATP synthase produces ATP from ADP in the presence of a proton or sodium gradient. F-type ATPases consist of two structural domains, F(1) containing the extramembraneous catalytic core and F(0) containing the membrane proton channel, linked together by a central stalk and a peripheral stalk. During catalysis, ATP synthesis in the catalytic domain of F(1) is coupled via a rotary mechanism of the central stalk subunits to proton translocation. In terms of biological role, component of the F(0) channel, it forms part of the peripheral stalk, linking F(1) to F(0). This chain is ATP synthase subunit b, found in Clostridium perfringens (strain SM101 / Type A).